The primary structure comprises 157 residues: Large ribosomal subunit protein eL24 (157 aa).

The disordered stretch occupies residues 94–157; that stretch reads RNQKPEVRKA…ISAPRVGGKR (64 aa). Basic and acidic residues predominate over residues 96–117; sequence QKPEVRKAQREQAIRAAKESKK. Residues 123–140 are compositionally biased toward low complexity; the sequence is KKPAAASAKTSAKTAQKP.

It belongs to the eukaryotic ribosomal protein eL24 family. In terms of assembly, component of the large ribosomal subunit.

It localises to the cytoplasm. Component of the large ribosomal subunit. The ribosome is a large ribonucleoprotein complex responsible for the synthesis of proteins in the cell. The polypeptide is Large ribosomal subunit protein eL24 (rpl24) (Gillichthys mirabilis (Long-jawed mudsucker)).